The following is a 529-amino-acid chain: Peptide chain release factor 3 (529 aa).

The tr-type G domain maps to 11–280; the sequence is SKRRTFAIIS…SLIKWAPSPI (270 aa). GTP contacts are provided by residues 20–27, 88–92, and 142–145; these read SHPDAGKT, DTPGH, and NKLD.

This sequence belongs to the TRAFAC class translation factor GTPase superfamily. Classic translation factor GTPase family. PrfC subfamily.

Its subcellular location is the cytoplasm. Functionally, increases the formation of ribosomal termination complexes and stimulates activities of RF-1 and RF-2. It binds guanine nucleotides and has strong preference for UGA stop codons. It may interact directly with the ribosome. The stimulation of RF-1 and RF-2 is significantly reduced by GTP and GDP, but not by GMP. The protein is Peptide chain release factor 3 of Buchnera aphidicola subsp. Schizaphis graminum (strain Sg).